A 71-amino-acid chain; its full sequence is MPVIKVRENESFDVALRRFKRSCEKAGILAEVRSREFYEKPTTIRKRENATRAKRHAKRVARENARNTRLY.

A disordered region spans residues 47–71 (RENATRAKRHAKRVARENARNTRLY). Residues 60 to 71 (VARENARNTRLY) show a composition bias toward basic and acidic residues.

It belongs to the bacterial ribosomal protein bS21 family.

The sequence is that of Small ribosomal subunit protein bS21 from Histophilus somni (strain 129Pt) (Haemophilus somnus).